A 98-amino-acid chain; its full sequence is Large ribosomal subunit protein uL23 (98 aa).

The protein belongs to the universal ribosomal protein uL23 family. As to quaternary structure, part of the 50S ribosomal subunit. Contacts protein L29, and trigger factor when it is bound to the ribosome.

In terms of biological role, one of the early assembly proteins it binds 23S rRNA. One of the proteins that surrounds the polypeptide exit tunnel on the outside of the ribosome. Forms the main docking site for trigger factor binding to the ribosome. This Bifidobacterium animalis subsp. lactis (strain AD011) protein is Large ribosomal subunit protein uL23.